A 545-amino-acid polypeptide reads, in one-letter code: Monocarboxylate transporter 8 (545 aa).

The disordered stretch occupies residues 1–98 (MALPSPASEE…VETRGTARGF (98 aa)). Alanine 2 is modified (N-acetylalanine). Over 2–102 (ALPSPASEEA…GTARGFQPPE (101 aa)) the chain is Cytoplasmic. 2 repeat units span residues 29–50 (PVPEPEPEPEPEPEPDPEPVPV) and 51–72 (PPPEPQPEPEPQPLPDPAPLPE). The segment at 29–72 (PVPEPEPEPEPEPEPDPEPVPVPPPEPQPEPEPQPLPDPAPLPE) is 2 X 22 AA approximate tandem repeats. Positions 33–45 (PEPEPEPEPEPDP) are enriched in acidic residues. Residues 46-70 (EPVPVPPPEPQPEPEPQPLPDPAPL) are compositionally biased toward pro residues. The chain crosses the membrane as a helical span at residues 103 to 123 (GGFGWIVVFAATWCNGSIFGI). Residues 124 to 149 (HNSVGILYSMLLEEEKEKNRQVEFQA) are Extracellular-facing. The helical transmembrane segment at 150–170 (AWVGALAMGMIFFCSPIVSIF) threads the bilayer. The Cytoplasmic segment spans residues 171 to 177 (TDRLGCR). A helical membrane pass occupies residues 178–198 (ITATTGAAVAFIGLHTSSFTS). Residues 199 to 206 (SLSLRYFT) are Extracellular-facing. The chain crosses the membrane as a helical span at residues 207-227 (YGILFGCGCSFAFQPSLVILG). The Cytoplasmic portion of the chain corresponds to 228-235 (HYFQRRLG). Residues 236–256 (LANGVVSAGSSIFSMSFPFLI) traverse the membrane as a helical segment. Residues 257–264 (KMLGDKIK) lie on the Extracellular side of the membrane. The helical transmembrane segment at 265 to 285 (LAQTFQVLSTFMFVLTLLSLT) threads the bilayer. Over 286–328 (YRPLLPSSQDTPSKRGAHTLRQRFLVQFRKYFNMRVFRQRTYR) the chain is Cytoplasmic. Residues 329 to 349 (IWAFGIAAAALGYFVPYVHLM) traverse the membrane as a helical segment. Topologically, residues 350–362 (KYVEDKFKEIKET) are extracellular. The helical transmembrane segment at 363 to 383 (WVLLVCIGATSGLGRLVSGHI) threads the bilayer. The Cytoplasmic segment spans residues 384 to 392 (SDSIPGLKK). The chain crosses the membrane as a helical span at residues 393-413 (IYLQVLSFLLLGLMSMMIPLC). Over 414 to 415 (RD) the chain is Extracellular. The chain crosses the membrane as a helical span at residues 416 to 436 (FGGLIVVCLFLGLCDGFFITI). Topologically, residues 437 to 453 (MAPIAFELVGPMQASQA) are cytoplasmic. The helical transmembrane segment at 454-474 (IGYLLGMMALPMIAGPPIAGL) threads the bilayer. Residues 475–483 (LRNCFGDYH) lie on the Extracellular side of the membrane. A helical membrane pass occupies residues 484-504 (VAFYFAGVPPIIGAVILFFVP). The Cytoplasmic portion of the chain corresponds to 505 to 545 (LMHQRMFKKEQRDSSKDKMLSHDPDPNGELLPGSPTPEEPI). Residues 514 to 529 (EQRDSSKDKMLSHDPD) show a composition bias toward basic and acidic residues. The disordered stretch occupies residues 514–545 (EQRDSSKDKMLSHDPDPNGELLPGSPTPEEPI). At threonine 540 the chain carries Phosphothreonine.

The protein belongs to the major facilitator superfamily. Monocarboxylate porter (TC 2.A.1.13) family. As to quaternary structure, monomer. Homodimer. Homooligomer. As to expression, expressed in cerebral microvessels.

It is found in the cell membrane. It localises to the apical cell membrane. It carries out the reaction 3,3',5-triiodo-L-thyronine(out) = 3,3',5-triiodo-L-thyronine(in). The catalysed reaction is 3,3',5'-triiodo-L-thyronine(out) = 3,3',5'-triiodo-L-thyronine(in). It catalyses the reaction L-thyroxine(out) = L-thyroxine(in). The enzyme catalyses 3,3'-diiodo-L-thyronine(out) = 3,3'-diiodo-L-thyronine(in). Functionally, specific thyroid hormone transmembrane transporter, that mediates both uptake and efflux of thyroid hormones across the cell membrane independently of pH or a Na(+) gradient. Major substrates are the iodothyronines T3 and T4 and to a lesser extent rT3 and 3,3-diiodothyronine (3,3'-T2). Acts as an important mediator of thyroid hormone transport, especially T3, through the blood-brain barrier. This Mus musculus (Mouse) protein is Monocarboxylate transporter 8 (Slc16a2).